The chain runs to 856 residues: Translation initiation factor IF-2 (856 aa).

Residues 356-526 form the tr-type G domain; sequence PRAPVVTVMG…LLIADLLELK (171 aa). Residues 365 to 372 form a G1 region; that stretch reads GHVDHGKT. 365–372 contributes to the GTP binding site; it reads GHVDHGKT. The G2 stretch occupies residues 390 to 394; the sequence is GITQH. The tract at residues 412 to 415 is G3; that stretch reads DTPG. Residues 412–416 and 466–469 each bind GTP; these read DTPGH and NKID. A G4 region spans residues 466–469; sequence NKID. Residues 502 to 504 are G5; that stretch reads SAK.

Belongs to the TRAFAC class translation factor GTPase superfamily. Classic translation factor GTPase family. IF-2 subfamily.

The protein localises to the cytoplasm. Its function is as follows. One of the essential components for the initiation of protein synthesis. Protects formylmethionyl-tRNA from spontaneous hydrolysis and promotes its binding to the 30S ribosomal subunits. Also involved in the hydrolysis of GTP during the formation of the 70S ribosomal complex. This chain is Translation initiation factor IF-2, found in Ehrlichia ruminantium (strain Welgevonden).